We begin with the raw amino-acid sequence, 139 residues long: Single-stranded DNA-binding protein 2 (139 aa).

In terms of domain architecture, SSB spans 1–104 (MLNRTVLVGR…VVADSVQFLE (104 aa)). The interval 103 to 139 (LEPKNNNKQNNQQHNGQTQTGNNPFDNTEEDFSDLPF) is disordered. Residues 106–125 (KNNNKQNNQQHNGQTQTGNN) show a composition bias toward low complexity. Residues 129–139 (NTEEDFSDLPF) show a composition bias toward acidic residues.

Homotetramer.

This chain is Single-stranded DNA-binding protein 2 (ssb-p), found in Staphylococcus aureus (strain COL).